The following is a 738-amino-acid chain: Dipeptidyl peptidase 3 (738 aa).

Residue A2 is modified to N-acetylalanine. H450 contacts Zn(2+). E451 is a catalytic residue. Residues H455 and E508 each contribute to the Zn(2+) site.

It belongs to the peptidase M49 family. The cofactor is Zn(2+).

The protein resides in the cytoplasm. It catalyses the reaction Release of an N-terminal dipeptide from a peptide comprising four or more residues, with broad specificity. Also acts on dipeptidyl 2-naphthylamides.. Its activity is regulated as follows. Inhibited by spinorphin, an opioid peptide derived from hemoglobin. Functionally, cleaves and degrades bioactive peptides, including angiotensin, Leu-enkephalin and Met-enkephalin. Also cleaves Arg-Arg-beta-naphthylamide. The protein is Dipeptidyl peptidase 3 (Dpp3) of Rattus norvegicus (Rat).